We begin with the raw amino-acid sequence, 95 residues long: Protein TusB (95 aa).

This sequence belongs to the DsrH/TusB family. Heterohexamer, formed by a dimer of trimers. The hexameric TusBCD complex contains 2 copies each of TusB, TusC and TusD. The TusBCD complex interacts with TusE.

It is found in the cytoplasm. In terms of biological role, part of a sulfur-relay system required for 2-thiolation of 5-methylaminomethyl-2-thiouridine (mnm(5)s(2)U) at tRNA wobble positions. This chain is Protein TusB, found in Escherichia fergusonii (strain ATCC 35469 / DSM 13698 / CCUG 18766 / IAM 14443 / JCM 21226 / LMG 7866 / NBRC 102419 / NCTC 12128 / CDC 0568-73).